A 52-amino-acid chain; its full sequence is ATP synthase F(1) complex subunit epsilon, mitochondrial (52 aa).

Residues Lys-21, Lys-32, and Lys-37 each carry the N6-acetyllysine; alternate modification. 3 positions are modified to N6-succinyllysine; alternate: Lys-21, Lys-32, and Lys-37. Residue Lys-44 is modified to N6-acetyllysine.

Belongs to the eukaryotic ATPase epsilon family. As to quaternary structure, component of the ATP synthase complex composed at least of ATP5F1A/subunit alpha, ATP5F1B/subunit beta, ATP5MC1/subunit c (homooctomer), MT-ATP6/subunit a, MT-ATP8/subunit 8, ATP5ME/subunit e, ATP5MF/subunit f, ATP5MG/subunit g, ATP5MK/subunit k, ATP5MJ/subunit j, ATP5F1C/subunit gamma, ATP5F1D/subunit delta, ATP5F1E/subunit epsilon, ATP5PF/subunit F6, ATP5PB/subunit b, ATP5PD/subunit d, ATP5PO/subunit OSCP. ATP synthase complex consists of a soluble F(1) head domain (subunits alpha(3) and beta(3)) - the catalytic core - and a membrane F(0) domain - the membrane proton channel (subunits c, a, 8, e, f, g, k and j). These two domains are linked by a central stalk (subunits gamma, delta, and epsilon) rotating inside the F1 region and a stationary peripheral stalk (subunits F6, b, d, and OSCP).

The protein localises to the mitochondrion. It is found in the mitochondrion inner membrane. In terms of biological role, subunit epsilon, of the mitochondrial membrane ATP synthase complex (F(1)F(0) ATP synthase or Complex V) that produces ATP from ADP in the presence of a proton gradient across the membrane which is generated by electron transport complexes of the respiratory chain. ATP synthase complex consist of a soluble F(1) head domain - the catalytic core - and a membrane F(1) domain - the membrane proton channel. These two domains are linked by a central stalk rotating inside the F(1) region and a stationary peripheral stalk. During catalysis, ATP synthesis in the catalytic domain of F(1) is coupled via a rotary mechanism of the central stalk subunits to proton translocation. In vivo, can only synthesize ATP although its ATP hydrolase activity can be activated artificially in vitro. May be essential for the assembly of F(1) and may play an important role in the incorporation of the hydrophobic subunit c into the F(1)-c oligomer rotor of the mitochondrial ATP synthase complex. This Mus musculus (Mouse) protein is ATP synthase F(1) complex subunit epsilon, mitochondrial.